Reading from the N-terminus, the 472-residue chain is Probable glycine dehydrogenase (decarboxylating) subunit 2 (472 aa).

Lys-268 bears the N6-(pyridoxal phosphate)lysine mark.

The protein belongs to the GcvP family. C-terminal subunit subfamily. The glycine cleavage system is composed of four proteins: P, T, L and H. In this organism, the P 'protein' is a heterodimer of two subunits. Pyridoxal 5'-phosphate is required as a cofactor.

It carries out the reaction N(6)-[(R)-lipoyl]-L-lysyl-[glycine-cleavage complex H protein] + glycine + H(+) = N(6)-[(R)-S(8)-aminomethyldihydrolipoyl]-L-lysyl-[glycine-cleavage complex H protein] + CO2. Its function is as follows. The glycine cleavage system catalyzes the degradation of glycine. The P protein binds the alpha-amino group of glycine through its pyridoxal phosphate cofactor; CO(2) is released and the remaining methylamine moiety is then transferred to the lipoamide cofactor of the H protein. This Thermoplasma volcanium (strain ATCC 51530 / DSM 4299 / JCM 9571 / NBRC 15438 / GSS1) protein is Probable glycine dehydrogenase (decarboxylating) subunit 2.